Here is an 89-residue protein sequence, read N- to C-terminus: Small ribosomal subunit protein uS14A (89 aa).

Belongs to the universal ribosomal protein uS14 family. Part of the 30S ribosomal subunit. Contacts proteins S3 and S10.

Its function is as follows. Binds 16S rRNA, required for the assembly of 30S particles and may also be responsible for determining the conformation of the 16S rRNA at the A site. This chain is Small ribosomal subunit protein uS14A, found in Lactococcus lactis subsp. lactis (strain IL1403) (Streptococcus lactis).